The following is a 1550-amino-acid chain: DNA excision repair protein ERCC-6-like 2 (1550 aa).

Residues 1 to 23 (MDPSAPQPRAETSGKDIWHPGER) are disordered. The span at 12 to 22 (TSGKDIWHPGE) shows a compositional bias: basic and acidic residues. In terms of domain architecture, Helicase ATP-binding spans 135-321 (YGHYIHGGGC…WCVMDWAVPG (187 aa)). Residue 148 to 155 (DDMGLGKT) coordinates ATP. The short motif at 272–275 (DEAH) is the DEAH box element. The region spanning 512-662 (VLQQLLNHCR…CVVVGSENAK (151 aa)) is the Helicase C-terminal domain. The Atypical PIP-box motif lies at 785–796 (PGQLTLLQCGFS). 3 disordered regions span residues 808–848 (DSDG…TSKH), 914–1002 (FPDN…SSLR), and 1354–1410 (AETK…TRTG). 2 stretches are compositionally biased toward basic and acidic residues: residues 830 to 840 (EAKDAGCEKNQ) and 933 to 953 (TEHT…DKRN). Phosphoserine occurs at positions 980 and 983. Over residues 992–1002 (SRVRKRASSLR) the composition is skewed to basic residues. Residues 1359-1388 (SPVSSTQEIDSGKNSQASEDTVTSRSLNSE) show a composition bias toward polar residues. Phosphoserine is present on residues serine 1373 and serine 1376. A compositionally biased stretch (basic and acidic residues) spans 1389–1405 (SETRERRLENTMKDQQD).

It belongs to the SNF2/RAD54 helicase family. In terms of assembly, interacts with NEK6. Interacts (via an atypical PIP-box) with PCNA; this interaction facilitates cenrtomeric localization of ERCC6L2. Interacts with CYREN; this interaction is DNA independent. Interacts with XRCC6 and XRCC5. Phosphorylated by NEK6. In terms of tissue distribution, expressed in bone marrow (at protein level).

It is found in the nucleus. It localises to the cytoplasm. The protein resides in the cytoskeleton. Its subcellular location is the microtubule organizing center. The protein localises to the centrosome. It is found in the mitochondrion. It localises to the chromosome. The protein resides in the centromere. Promotes double-strand break (DSB) end-joining and facilitates programmed recombination by controlling how DNA ends are joined in a spatially oriented manner during repair. Also plays a role in DNA repair by restricting DNA end resection in double strand break (DSB) repair. Facilitates replication of complex DNA regions and regulates the maintenance of chromatin structure. This chain is DNA excision repair protein ERCC-6-like 2, found in Homo sapiens (Human).